Here is a 224-residue protein sequence, read N- to C-terminus: Putative O-methyltransferase MMAR_4217 (224 aa).

Over residues 1–11 (MHGTDSSSDTP) the composition is skewed to polar residues. The interval 1 to 20 (MHGTDSSSDTPGQPAPSRAE) is disordered. Residues Val-51, Glu-73, 75-76 (GT), Ser-81, Asp-99, and Ile-100 contribute to the S-adenosyl-L-methionine site. Substrate is bound at residue Asp-147. Asp-149 is a binding site for S-adenosyl-L-methionine.

The protein belongs to the class I-like SAM-binding methyltransferase superfamily. Cation-dependent O-methyltransferase family.

This chain is Putative O-methyltransferase MMAR_4217, found in Mycobacterium marinum (strain ATCC BAA-535 / M).